The sequence spans 87 residues: Large ribosomal subunit protein uL23c (87 aa).

The protein belongs to the universal ribosomal protein uL23 family. Part of the 50S ribosomal subunit.

It localises to the plastid. It is found in the chloroplast. Binds to 23S rRNA. The chain is Large ribosomal subunit protein uL23c (rpl23) from Bigelowiella natans (Pedinomonas minutissima).